The primary structure comprises 693 residues: Polyribonucleotide nucleotidyltransferase (693 aa).

Residues D489 and D495 each contribute to the Mg(2+) site. The region spanning 556–615 is the KH domain; that stretch reads PQIHVMNINPAKIKDVVGRGGATVKGIVEKTGAQIDTSDSGEVKVFAKDKKSMDMAVAMI. The S1 motif domain maps to 625 to 693; the sequence is GQVYKGKIVK…GRVKLSLVAR (69 aa).

This sequence belongs to the polyribonucleotide nucleotidyltransferase family. Component of the RNA degradosome, which is a multiprotein complex involved in RNA processing and mRNA degradation. Mg(2+) is required as a cofactor.

It is found in the cytoplasm. The catalysed reaction is RNA(n+1) + phosphate = RNA(n) + a ribonucleoside 5'-diphosphate. In terms of biological role, involved in mRNA degradation. Catalyzes the phosphorolysis of single-stranded polyribonucleotides processively in the 3'- to 5'-direction. The protein is Polyribonucleotide nucleotidyltransferase of Francisella tularensis subsp. tularensis (strain FSC 198).